The primary structure comprises 416 residues: MKTYIVGGAVRDELLGVAVKDRDYVVVGATPEAMVAQGYTPVGKDFPVFLHPKTHAEYALARTERKTAPGYKGFVFHTDASVTLEEDLIRRDLTINAMAQDEDGSIVDPFGGKRDLELRIFRHVSPAFAEDPVRILRIARFAARFPEFTVAAETNTLMQDMVTAGEVDALVPERVWQELARGLMEVRPSRMFEVLRDCGALQRILPELDVLWGVPQPAQYHPEIDTGVHIMLVIDYAAGIKADLPVRCAALLHDLGKGVTLPDQWPRHHGHEMHSVKLVDTVSKRLKIPNDCRDLALMTAREHGNVGRALELRANTIVNLLERCDAFRKPQRFIEMLQASECDHRGRTGFADKPFPQKAYLQAALAAAQTVNGGEIAELTRQRYPDQAQRIPEAIHEARVQAVAAALKKQPGDPKE.

Positions 8 and 11 each coordinate ATP. Residues Gly-8 and Arg-11 each coordinate CTP. The Mg(2+) site is built by Asp-21 and Asp-23. Residues Arg-91, Arg-137, and Arg-140 each contribute to the ATP site. CTP contacts are provided by Arg-91, Arg-137, and Arg-140. Positions 226–327 (TGVHIMLVID…VNLLERCDAF (102 aa)) constitute an HD domain.

The protein belongs to the tRNA nucleotidyltransferase/poly(A) polymerase family. Bacterial CCA-adding enzyme type 1 subfamily. In terms of assembly, monomer. Can also form homodimers and oligomers. The cofactor is Mg(2+). Ni(2+) serves as cofactor.

It carries out the reaction a tRNA precursor + 2 CTP + ATP = a tRNA with a 3' CCA end + 3 diphosphate. The enzyme catalyses a tRNA with a 3' CCA end + 2 CTP + ATP = a tRNA with a 3' CCACCA end + 3 diphosphate. Its function is as follows. Catalyzes the addition and repair of the essential 3'-terminal CCA sequence in tRNAs without using a nucleic acid template. Adds these three nucleotides in the order of C, C, and A to the tRNA nucleotide-73, using CTP and ATP as substrates and producing inorganic pyrophosphate. tRNA 3'-terminal CCA addition is required both for tRNA processing and repair. Also involved in tRNA surveillance by mediating tandem CCA addition to generate a CCACCA at the 3' terminus of unstable tRNAs. While stable tRNAs receive only 3'-terminal CCA, unstable tRNAs are marked with CCACCA and rapidly degraded. In Janthinobacterium sp. (strain Marseille) (Minibacterium massiliensis), this protein is Multifunctional CCA protein.